A 102-amino-acid polypeptide reads, in one-letter code: Small ribosomal subunit protein uS10 (102 aa).

This sequence belongs to the universal ribosomal protein uS10 family. In terms of assembly, part of the 30S ribosomal subunit.

Its function is as follows. Involved in the binding of tRNA to the ribosomes. The chain is Small ribosomal subunit protein uS10 from Hyperthermus butylicus (strain DSM 5456 / JCM 9403 / PLM1-5).